We begin with the raw amino-acid sequence, 201 residues long: Pyridoxal 5'-phosphate synthase subunit PdxT (201 aa).

Residue 49 to 51 (GES) participates in L-glutamine binding. Cys-81 functions as the Nucleophile in the catalytic mechanism. L-glutamine-binding positions include Arg-110 and 139 to 140 (IR). Active-site charge relay system residues include His-180 and Glu-182.

Belongs to the glutaminase PdxT/SNO family. In terms of assembly, in the presence of PdxS, forms a dodecamer of heterodimers. Only shows activity in the heterodimer.

The enzyme catalyses aldehydo-D-ribose 5-phosphate + D-glyceraldehyde 3-phosphate + L-glutamine = pyridoxal 5'-phosphate + L-glutamate + phosphate + 3 H2O + H(+). It carries out the reaction L-glutamine + H2O = L-glutamate + NH4(+). It functions in the pathway cofactor biosynthesis; pyridoxal 5'-phosphate biosynthesis. In terms of biological role, catalyzes the hydrolysis of glutamine to glutamate and ammonia as part of the biosynthesis of pyridoxal 5'-phosphate. The resulting ammonia molecule is channeled to the active site of PdxS. The protein is Pyridoxal 5'-phosphate synthase subunit PdxT of Salinispora tropica (strain ATCC BAA-916 / DSM 44818 / JCM 13857 / NBRC 105044 / CNB-440).